The chain runs to 290 residues: 4-hydroxybenzoate octaprenyltransferase (290 aa).

The next 8 membrane-spanning stretches (helical) occupy residues 23-43, 46-66, 99-119, 141-161, 163-183, 213-233, 234-254, and 268-288; these read IGALLLLWPTLWALWVATPGV, LWILAVFVAGVWLMRAAGCVV, LFVVLVLISFLLVLTLNTMTI, LPQVVLGAAFGWSIPMAFAAV, ESVPLSCWLMFLANILWAVAY, LIIGILQIGVLALMAIIGELN, GLGWGYYWSIVVAGALFVYQQ, and AFMNNNYVGLVLFLGLAMSYW.

It belongs to the UbiA prenyltransferase family. The cofactor is Mg(2+).

It localises to the cell inner membrane. The catalysed reaction is all-trans-octaprenyl diphosphate + 4-hydroxybenzoate = 4-hydroxy-3-(all-trans-octaprenyl)benzoate + diphosphate. The protein operates within cofactor biosynthesis; ubiquinone biosynthesis. Catalyzes the prenylation of para-hydroxybenzoate (PHB) with an all-trans polyprenyl group. Mediates the second step in the final reaction sequence of ubiquinone-8 (UQ-8) biosynthesis, which is the condensation of the polyisoprenoid side chain with PHB, generating the first membrane-bound Q intermediate 3-octaprenyl-4-hydroxybenzoate. This Escherichia coli (strain SE11) protein is 4-hydroxybenzoate octaprenyltransferase.